Consider the following 99-residue polypeptide: Small ribosomal subunit protein bS16 (99 aa).

The interval 80-99 (PPRQQNEAKRETAETAQPEA) is disordered.

Belongs to the bacterial ribosomal protein bS16 family.

This chain is Small ribosomal subunit protein bS16, found in Thermomicrobium roseum (strain ATCC 27502 / DSM 5159 / P-2).